A 441-amino-acid polypeptide reads, in one-letter code: Ribosomal protein uS12 methylthiotransferase RimO (441 aa).

Positions 8–118 (PKIGFVSLGC…VLQHVHHYVP (111 aa)) constitute an MTTase N-terminal domain. Cys-17, Cys-53, Cys-82, Cys-150, Cys-154, and Cys-157 together coordinate [4Fe-4S] cluster. In terms of domain architecture, Radical SAM core spans 136-373 (LTPRHYAYLK…MALQQQISAE (238 aa)). The TRAM domain maps to 376-441 (QEKVGREILV…DEYDLWGSLV (66 aa)).

This sequence belongs to the methylthiotransferase family. RimO subfamily. It depends on [4Fe-4S] cluster as a cofactor.

The protein resides in the cytoplasm. It carries out the reaction L-aspartate(89)-[ribosomal protein uS12]-hydrogen + (sulfur carrier)-SH + AH2 + 2 S-adenosyl-L-methionine = 3-methylsulfanyl-L-aspartate(89)-[ribosomal protein uS12]-hydrogen + (sulfur carrier)-H + 5'-deoxyadenosine + L-methionine + A + S-adenosyl-L-homocysteine + 2 H(+). Its function is as follows. Catalyzes the methylthiolation of an aspartic acid residue of ribosomal protein uS12. The protein is Ribosomal protein uS12 methylthiotransferase RimO of Cronobacter sakazakii (strain ATCC BAA-894) (Enterobacter sakazakii).